The primary structure comprises 305 residues: Tyrosine recombinase XerC (305 aa).

The 93-residue stretch at 1–93 (MVLDGFAAHF…SWRQYCVWLV (93 aa)) folds into the Core-binding (CB) domain. A Tyr recombinase domain is found at 114-294 (RVPKALPQEW…DFDHIARLYD (181 aa)). Catalysis depends on residues Arg155, Lys179, His246, Arg249, and His272. The O-(3'-phospho-DNA)-tyrosine intermediate role is filled by Tyr281.

This sequence belongs to the 'phage' integrase family. XerC subfamily. As to quaternary structure, forms a cyclic heterotetrameric complex composed of two molecules of XerC and two molecules of XerD.

It is found in the cytoplasm. Site-specific tyrosine recombinase, which acts by catalyzing the cutting and rejoining of the recombining DNA molecules. The XerC-XerD complex is essential to convert dimers of the bacterial chromosome into monomers to permit their segregation at cell division. It also contributes to the segregational stability of plasmids. In Neisseria meningitidis serogroup C (strain 053442), this protein is Tyrosine recombinase XerC.